A 147-amino-acid polypeptide reads, in one-letter code: Hemoglobin subunit epsilon (147 aa).

Residues His-3 to His-147 form the Globin domain. 2 positions are modified to phosphoserine: Ser-14 and Ser-51. His-64 and His-93 together coordinate heme b.

Belongs to the globin family. In terms of assembly, heterotetramer of two alpha chains and two epsilon chains in early embryonic hemoglobin Gower-2; two zeta chains and two epsilon chains in early embryonic hemoglobin Gower-1. Red blood cells.

Functionally, the epsilon chain is a beta-type chain of early mammalian embryonic hemoglobin. This is Hemoglobin subunit epsilon (HBE1) from Eulemur fulvus fulvus (Brown lemur).